A 172-amino-acid chain; its full sequence is Interferon tau-3 (172 aa).

2 disulfide bridges follow: Cys1–Cys99 and Cys29–Cys139. N-linked (GlcNAc...) asparagine glycosylation is present at Asn78.

This sequence belongs to the alpha/beta interferon family. IFN-alphaII subfamily. Constitutively and exclusively expressed in the mononuclear cells of the extraembryonic trophectoderm.

The protein resides in the secreted. Its function is as follows. Paracrine hormone primarily responsible for maternal recognition of pregnancy. Interacts with endometrial receptors, probably type I interferon receptors, and blocks estrogen receptor expression, preventing the estrogen-induced increase in oxytocin receptor expression in the endometrium. This results in the suppression of the pulsatile endometrial release of the luteolytic hormone prostaglandin F2-alpha, hindering the regression of the corpus luteum (luteolysis) and therefore a return to ovarian cyclicity. This, and a possible direct effect of IFN-tau on prostaglandin synthesis, leads in turn to continued ovarian progesterone secretion, which stimulates the secretion by the endometrium of the nutrients required for the growth of the conceptus. In summary, displays particularly high antiviral and antiproliferative potency concurrently with particular weak cytotoxicity, high antiluteolytic activity and immunomodulatory properties. In contrast with other IFNs, IFN-tau is not virally inducible. The sequence is that of Interferon tau-3 (IFNT3) from Bos taurus (Bovine).